Consider the following 467-residue polypeptide: ATP-dependent protease ATPase subunit HslU (467 aa).

ATP-binding positions include V22 and 64-69 (GVGKTE). The segment at 149–192 (QTNNPLESLFGGAIPNFGQNNEDEEEPPTEEIKTKRSEIKRQLE) is disordered. Residues 178 to 192 (EEIKTKRSEIKRQLE) show a composition bias toward basic and acidic residues. Residues D280, E345, and R417 each contribute to the ATP site.

Belongs to the ClpX chaperone family. HslU subfamily. A double ring-shaped homohexamer of HslV is capped on each side by a ring-shaped HslU homohexamer. The assembly of the HslU/HslV complex is dependent on binding of ATP.

The protein localises to the cytoplasm. In terms of biological role, ATPase subunit of a proteasome-like degradation complex; this subunit has chaperone activity. The binding of ATP and its subsequent hydrolysis by HslU are essential for unfolding of protein substrates subsequently hydrolyzed by HslV. HslU recognizes the N-terminal part of its protein substrates and unfolds these before they are guided to HslV for hydrolysis. The chain is ATP-dependent protease ATPase subunit HslU from Staphylococcus aureus (strain bovine RF122 / ET3-1).